Consider the following 553-residue polypeptide: Keratin, type II cytoskeletal 6A (553 aa).

The segment covering 1–20 (MSTKTTIKSQTSHRGYSASS) has biased composition (polar residues). Residues 1–21 (MSTKTTIKSQTSHRGYSASSA) form a disordered region. The interval 1 to 151 (MSTKTTIKSQ…DPTIQRVRTE (151 aa)) is head. A coil 1A region spans residues 152–187 (EREQIKTLNNKFASFIDKVRFLEQQNKVLDTKWALL). The region spanning 152 to 465 (EREQIKTLNN…KLLEGEECRL (314 aa)) is the IF rod domain. Residues 188–206 (QEQGTKTVRQNLEPMFEQY) form a linker 1 region. The coil 1B stretch occupies residues 207–298 (ISNLRRQLDS…ALYEAELSQM (92 aa)). Positions 299 to 322 (QTHISDTSVVLSMDNNRSLDLDSI) are linker 12. Residues 323 to 461 (IAEVKAQYED…ATYRKLLEGE (139 aa)) form a coil 2 region. Positions 462 to 553 (ECRLNGEGVG…TSSSKKSYRQ (92 aa)) are tail. The interval 528 to 553 (LSSSGGLSSSTIKYTTTSSSKKSYRQ) is disordered. A compositionally biased stretch (low complexity) spans 531 to 553 (SGGLSSSTIKYTTTSSSKKSYRQ).

This sequence belongs to the intermediate filament family. In terms of assembly, heterodimer of a type I and a type II keratin. KRT6 isomers associate with KRT16 and/or KRT17. Interacts with TCHP. In terms of tissue distribution, predominates in the adult trunk skin, tongue, trachea/esophagus and eye. In adult skin, localization is restricted to hair follicles, where it is localized predominantly in the outer root sheath.

Its function is as follows. Epidermis-specific type I keratin involved in wound healing. Involved in the activation of follicular keratinocytes after wounding, while it does not play a major role in keratinocyte proliferation or migration. Participates in the regulation of epithelial migration by inhibiting the activity of SRC during wound repair. This Mus musculus (Mouse) protein is Keratin, type II cytoskeletal 6A (Krt6a).